The sequence spans 342 residues: Adenylate isopentenyltransferase 6, chloroplastic (342 aa).

A chloroplast-targeting transit peptide spans 1 to 33 (MQQLMTLLSPPLSHSSLLPTVTTKFGSPRLVTT). 52–59 (GTTGTGKS) serves as a coordination point for ATP.

The protein belongs to the IPP transferase family. Expressed in siliques, at the mRNA level.

The protein resides in the plastid. Its subcellular location is the chloroplast. The catalysed reaction is dimethylallyl diphosphate + ADP = N(6)-(dimethylallyl)adenosine 5'-diphosphate + diphosphate. The enzyme catalyses dimethylallyl diphosphate + ATP = N(6)-(dimethylallyl)adenosine 5'-triphosphate + diphosphate. Its function is as follows. Involved in cytokinin biosynthesis. Catalyzes the transfer of an isopentenyl group from dimethylallyl diphosphate (DMAPP) to ATP and ADP. The sequence is that of Adenylate isopentenyltransferase 6, chloroplastic (IPT6) from Arabidopsis thaliana (Mouse-ear cress).